Consider the following 403-residue polypeptide: S-adenosylmethionine synthase (403 aa).

H17 contributes to the ATP binding site. D19 contributes to the Mg(2+) binding site. E45 lines the K(+) pocket. Residues E58 and Q104 each coordinate L-methionine. Residues 104–114 are flexible loop; that stretch reads QSPDIAQGVDT. ATP contacts are provided by residues 179 to 181, 250 to 251, D259, 265 to 266, A282, and K286; these read DGK, KF, and RK. An L-methionine-binding site is contributed by D259. K290 contacts L-methionine.

The protein belongs to the AdoMet synthase family. In terms of assembly, homotetramer; dimer of dimers. Mg(2+) serves as cofactor. The cofactor is K(+).

The protein localises to the cytoplasm. It catalyses the reaction L-methionine + ATP + H2O = S-adenosyl-L-methionine + phosphate + diphosphate. It participates in amino-acid biosynthesis; S-adenosyl-L-methionine biosynthesis; S-adenosyl-L-methionine from L-methionine: step 1/1. Catalyzes the formation of S-adenosylmethionine (AdoMet) from methionine and ATP. The overall synthetic reaction is composed of two sequential steps, AdoMet formation and the subsequent tripolyphosphate hydrolysis which occurs prior to release of AdoMet from the enzyme. In Mycobacterium ulcerans (strain Agy99), this protein is S-adenosylmethionine synthase.